A 266-amino-acid chain; its full sequence is Protein STAY-GREEN homolog, chloroplastic (266 aa).

The transit peptide at 1–50 (MGTLTASLVAPSKLNPEKHSSLFVYKTRRKSHKNQSIVPVARLFGPAIFE) directs the protein to the chloroplast.

The protein belongs to the staygreen family.

It is found in the plastid. The protein resides in the chloroplast. Functionally, required to trigger chlorophyll degradation during leaf senescence and fruit ripening. The chain is Protein STAY-GREEN homolog, chloroplastic from Capsicum annuum (Capsicum pepper).